Consider the following 402-residue polypeptide: uncharacterized protein (402 aa).

The tract at residues 332–402 is disordered; it reads MFSSSSSSSE…PEPPPGKPGR (71 aa). Residues 370–379 show a composition bias toward polar residues; it reads SETTSLQQYS. The span at 393-402 shows a compositional bias: pro residues; it reads PEPPPGKPGR.

This is an uncharacterized protein from Mus musculus (Mouse).